Consider the following 64-residue polypeptide: UPF0434 protein Bcep18194_A5877 (64 aa).

Belongs to the UPF0434 family.

The chain is UPF0434 protein Bcep18194_A5877 from Burkholderia lata (strain ATCC 17760 / DSM 23089 / LMG 22485 / NCIMB 9086 / R18194 / 383).